A 220-amino-acid chain; its full sequence is Iron-sulfur flavoprotein AF_1436 (220 aa).

[4Fe-4S] cluster is bound by residues C47, C50, C53, and C59.

It belongs to the SsuE family. Isf subfamily. As to quaternary structure, homodimer. FMN serves as cofactor. Requires [4Fe-4S] cluster as cofactor.

Redox-active protein probably involved in electron transport. In Archaeoglobus fulgidus (strain ATCC 49558 / DSM 4304 / JCM 9628 / NBRC 100126 / VC-16), this protein is Iron-sulfur flavoprotein AF_1436.